The chain runs to 354 residues: Protein-glutamate methylesterase/protein-glutamine glutaminase (354 aa).

Residues 7 to 124 enclose the Response regulatory domain; the sequence is KVLCVDDSAL…REGMLEYTEM (118 aa). 4-aspartylphosphate is present on aspartate 58. A CheB-type methylesterase domain is found at 156–348; that stretch reads LLSSEKVIII…AALMKRAEAS (193 aa). Residues serine 168, histidine 194, and aspartate 290 contribute to the active site.

This sequence belongs to the CheB family. Post-translationally, phosphorylated by CheA. Phosphorylation of the N-terminal regulatory domain activates the methylesterase activity.

It is found in the cytoplasm. The catalysed reaction is [protein]-L-glutamate 5-O-methyl ester + H2O = L-glutamyl-[protein] + methanol + H(+). It carries out the reaction L-glutaminyl-[protein] + H2O = L-glutamyl-[protein] + NH4(+). In terms of biological role, involved in chemotaxis. Part of a chemotaxis signal transduction system that modulates chemotaxis in response to various stimuli. Catalyzes the demethylation of specific methylglutamate residues introduced into the chemoreceptors (methyl-accepting chemotaxis proteins or MCP) by CheR. Also mediates the irreversible deamidation of specific glutamine residues to glutamic acid. This chain is Protein-glutamate methylesterase/protein-glutamine glutaminase, found in Chromohalobacter salexigens (strain ATCC BAA-138 / DSM 3043 / CIP 106854 / NCIMB 13768 / 1H11).